The sequence spans 454 residues: UDP-N-acetylmuramate--L-alanine ligase (454 aa).

113–119 (GSHGKTT) serves as a coordination point for ATP.

This sequence belongs to the MurCDEF family.

Its subcellular location is the cytoplasm. The catalysed reaction is UDP-N-acetyl-alpha-D-muramate + L-alanine + ATP = UDP-N-acetyl-alpha-D-muramoyl-L-alanine + ADP + phosphate + H(+). Its pathway is cell wall biogenesis; peptidoglycan biosynthesis. Functionally, cell wall formation. In Aquifex aeolicus (strain VF5), this protein is UDP-N-acetylmuramate--L-alanine ligase.